We begin with the raw amino-acid sequence, 369 residues long: Glutamate 5-kinase (369 aa).

Residue lysine 14 coordinates ATP. Substrate contacts are provided by serine 54, aspartate 141, and asparagine 153. Residues 173–174 (SD) and 215–221 (TGGMVTK) each bind ATP. Residues 277–355 (RGRLHLDPGA…SELATALGPA (79 aa)) enclose the PUA domain.

The protein belongs to the glutamate 5-kinase family.

The protein resides in the cytoplasm. The catalysed reaction is L-glutamate + ATP = L-glutamyl 5-phosphate + ADP. The protein operates within amino-acid biosynthesis; L-proline biosynthesis; L-glutamate 5-semialdehyde from L-glutamate: step 1/2. Catalyzes the transfer of a phosphate group to glutamate to form L-glutamate 5-phosphate. The sequence is that of Glutamate 5-kinase from Salinispora arenicola (strain CNS-205).